A 629-amino-acid chain; its full sequence is Chaperone protein DnaK (629 aa).

Residues Gln-576–Gly-587 show a composition bias toward low complexity. Positions Gln-576–Glu-629 are disordered. Residues Ala-588–Gly-607 are compositionally biased toward gly residues. A compositionally biased stretch (acidic residues) spans Ala-611–Glu-629.

The protein belongs to the heat shock protein 70 family.

Its function is as follows. Acts as a chaperone. In Halobacterium salinarum (strain ATCC 29341 / DSM 671 / R1), this protein is Chaperone protein DnaK.